A 1271-amino-acid chain; its full sequence is Breakpoint cluster region protein (1271 aa).

Residue Met1 is modified to N-acetylmethionine. Positions 1-426 (MVDPVGFAEA…DGEGAFHGDA (426 aa)) are kinase. The stretch at 28–55 (VGDIEQELERCKASIRRLEQEVNQERFR) forms a coiled coil. Residues 67–173 (KKSYDRQRWG…GHGQPGADAE (107 aa)) form a disordered region. A compositionally biased stretch (low complexity) spans 87-105 (ASEPRASASRPQPAPADGA). Ser122 carries the post-translational modification Phosphoserine. Positions 123 to 138 (PGKARPGTARRPGAAA) are enriched in low complexity. Position 139 is a phosphoserine (Ser139). Tyr177 carries the phosphotyrosine; by HCK modification. Over residues 185–198 (ERGLVKVNDKEVSD) the composition is skewed to basic and acidic residues. Disordered stretches follow at residues 185–247 (ERGL…GDYE), 286–392 (GMME…HKRH), and 416–476 (NDGE…SRDA). The interval 197–385 (SDRISSLGSQ…QSFDSSSPPT (189 aa)) is binding to ABL SH2-domain. Residues 199-208 (RISSLGSQAM) are compositionally biased toward polar residues. Phosphoserine occurs at positions 202, 215, 222, and 236. Tyr246 is subject to Phosphotyrosine; by FES. 2 stretches are compositionally biased toward low complexity: residues 346 to 356 (SSGQSSRVSPS) and 369 to 382 (SPSQ…DSSS). 3 positions are modified to phosphoserine: Ser356, Ser377, and Ser382. Thr385 is modified (phosphothreonine). A compositionally biased stretch (basic and acidic residues) spans 441-451 (DRAEEQRRHQD). Residues Ser459 and Ser463 each carry the phosphoserine modification. Position 471 is an omega-N-methylarginine (Arg471). A phosphoserine mark is found at Ser473 and Ser488. The region spanning 498–691 (MRKWVLSGIL…QNFLSSINEE (194 aa)) is the DH domain. A Phosphotyrosine modification is found at Tyr554. The residue at position 641 (Thr641) is a Phosphothreonine. Tyr644 carries the phosphotyrosine modification. At Thr693 the chain carries Phosphothreonine. One can recognise a PH domain in the interval 708-866 (QLLKDSFMVE…WRENIREQQK (159 aa)). The C2 domain maps to 893–1020 (HSIPLTINKE…QDRDWQRTVI (128 aa)). Position 894 is a phosphoserine (Ser894). The 195-residue stretch at 1054–1248 (VKIAVVTKRE…VMSQVQVLLY (195 aa)) folds into the Rho-GAP domain. Ser1264 bears the Phosphoserine mark.

In terms of assembly, homotetramer. Interacts with PDZK1. May interact with CCPG1. Interacts with FES/FPS, ABL1, PIK3R1 and GRB2. Interacts with HCK. Interacts with SH2D5. Interacts with DLG4. Autophosphorylated. Phosphorylated by FES/FPS on tyrosine residues, leading to down-regulation of the BCR kinase activity. Phosphorylation at Tyr-177 by HCK is important for interaction with GRB2.

It localises to the postsynaptic density. The protein resides in the cell projection. The protein localises to the dendritic spine. It is found in the axon. Its subcellular location is the synapse. The enzyme catalyses L-seryl-[protein] + ATP = O-phospho-L-seryl-[protein] + ADP + H(+). The catalysed reaction is L-threonyl-[protein] + ATP = O-phospho-L-threonyl-[protein] + ADP + H(+). Protein with a unique structure having two opposing regulatory activities toward small GTP-binding proteins. The C-terminus is a GTPase-activating protein (GAP) domain which stimulates GTP hydrolysis by RAC1, RAC2 and CDC42. Accelerates the intrinsic rate of GTP hydrolysis of RAC1 or CDC42, leading to down-regulation of the active GTP-bound form. The central Dbl homology (DH) domain functions as guanine nucleotide exchange factor (GEF) that modulates the GTPases CDC42, RHOA and RAC1. Promotes the conversion of CDC42, RHOA and RAC1 from the GDP-bound to the GTP-bound form. The amino terminus contains an intrinsic kinase activity. Functions as an important negative regulator of neuronal RAC1 activity. Regulates macrophage functions such as CSF1-directed motility and phagocytosis through the modulation of RAC1 activity. Plays a major role as a RHOA GEF in keratinocytes being involved in focal adhesion formation and keratinocyte differentiation. This chain is Breakpoint cluster region protein, found in Homo sapiens (Human).